The sequence spans 704 residues: RCC1 domain-containing protein DDB_G0295713 (704 aa).

2 RCC1 repeats span residues methionine 1–glutamate 48 and lysine 69–glutamine 120. The disordered stretch occupies residues tyrosine 221 to asparagine 246. Residues asparagine 222–asparagine 246 show a composition bias toward low complexity. The RCC1 3 repeat unit spans residues glutamine 298–asparagine 348. A compositionally biased stretch (basic and acidic residues) spans isoleucine 412–histidine 431. Positions isoleucine 412–asparagine 458 are disordered. The span at aspartate 432 to aspartate 451 shows a compositional bias: acidic residues. Positions isoleucine 668–lysine 698 form a coiled coil.

This Dictyostelium discoideum (Social amoeba) protein is RCC1 domain-containing protein DDB_G0295713.